The chain runs to 162 residues: Transcription elongation factor GreA (162 aa).

The stretch at 48–76 (NSEYQSAKDEQAFVEGRVKQLQQMIQFAQ) forms a coiled coil. A disordered region spans residues 111–132 (GSAESDPLSGKISNDSPMGKAL).

The protein belongs to the GreA/GreB family.

Necessary for efficient RNA polymerase transcription elongation past template-encoded arresting sites. The arresting sites in DNA have the property of trapping a certain fraction of elongating RNA polymerases that pass through, resulting in locked ternary complexes. Cleavage of the nascent transcript by cleavage factors such as GreA or GreB allows the resumption of elongation from the new 3'terminus. GreA releases sequences of 2 to 3 nucleotides. In Oenococcus oeni (strain ATCC BAA-331 / PSU-1), this protein is Transcription elongation factor GreA.